The following is a 523-amino-acid chain: MSLQTNHRPVLVVDFGAQYAQLIARRVREAGIYSEVIPHTATADDVRAKNAAALVLSGGPSSVYAEGAPSLDAEILDLGLPVFGICYGFQAMTHALGGTVANTGKREYGRTDINVAGGVLHEGLEACHKVWMSHGDAVSEAPEGFVVTASSEGAPVAAFENKERKMAGVQYHPEVLHSPHGQAVLTRFLTEIAGLEQNWTAANIAEELIEKVREQIGEDGRAICGLSGGVDSAVAGALVQRAIGDRLTCVFVDHGLLRAGEREQVEKDFVAATGAKLVTVDERQAFLSKLAGVTEPEAKRKAIGAEFIRSFERAVAGVLEEAPEGSTVDFLVQGTLYPDVVESGGGSGTANIKSHHNVGGLPDDVEFKLVEPLRDLFKDEVRAVGRELGLPEEIVGRQPFPGPGLGIRIIGEVTEERLETLRHADLIARTELTAAGLDGVIWQCPVVLLADVRSVGVQGDGRTYGHPIVLRPVSSEDAMTADWTRLPYEVLEKISTRITNEVPDVNRVVLDVTSKPPGTIEWE.

A Glutamine amidotransferase type-1 domain is found at P9–N198. C86 serves as the catalytic Nucleophile. Residues H172 and E174 contribute to the active site. The GMPS ATP-PPase domain maps to W199–R397. ATP is bound at residue S227 to A233.

As to quaternary structure, homodimer.

It catalyses the reaction XMP + L-glutamine + ATP + H2O = GMP + L-glutamate + AMP + diphosphate + 2 H(+). It functions in the pathway purine metabolism; GMP biosynthesis; GMP from XMP (L-Gln route): step 1/1. Functionally, catalyzes the synthesis of GMP from XMP. This Corynebacterium glutamicum (strain R) protein is GMP synthase [glutamine-hydrolyzing].